Consider the following 365-residue polypeptide: TD and POZ domain-containing protein 1-like (365 aa).

The MATH domain occupies 19–149 (KFCYKWTISN…EDQLTICCKV (131 aa)). A BTB domain is found at 188–255 (TDCCLLVAGH…IYTGKAPYLH (68 aa)).

The protein belongs to the Tdpoz family.

The polypeptide is TD and POZ domain-containing protein 1-like (Mus musculus (Mouse)).